A 33-amino-acid chain; its full sequence is Cysteine-rich venom protein (33 aa).

The tract at residues Asn1–Ala33 is disordered. Over residues Ser24–Ala33 the composition is skewed to basic residues.

The protein belongs to the CRISP family. Post-translationally, contains 8 disulfide bonds. Expressed by the venom gland.

It localises to the secreted. Blocks contraction of smooth muscle elicited by high potassium-induced depolarization, but does not block caffeine-stimulated contraction. May target voltage-gated calcium channels on smooth muscle (Cav). This is Cysteine-rich venom protein from Naja naja (Indian cobra).